A 502-amino-acid polypeptide reads, in one-letter code: Histidine--tRNA ligase (502 aa).

It belongs to the class-II aminoacyl-tRNA synthetase family. Homodimer.

Its subcellular location is the cytoplasm. The catalysed reaction is tRNA(His) + L-histidine + ATP = L-histidyl-tRNA(His) + AMP + diphosphate + H(+). The sequence is that of Histidine--tRNA ligase from Brucella suis (strain ATCC 23445 / NCTC 10510).